The sequence spans 476 residues: E1B 55 kDa protein (476 aa).

2 disordered regions span residues 1–20 (MERP…GNGS) and 42–95 (FGSS…KMEN). Residues Ser472 and Ser473 each carry the phosphoserine modification.

This sequence belongs to the adenoviridae E1B 55 kDa protein family. Interacts with host PML-4 and PML-5; this interaction promotes efficient subnuclear targeting of E1B-55K to PML nuclear bodies. Interacts with E4-ORF3 protein. Interacts with E4-ORF6 protein.

The protein resides in the host nucleus. The protein localises to the host cytoplasm. Its function is as follows. Plays a major role to prevent cellular inhibition of viral genome replication. Assembles an SCF-like E3 ubiquitin ligase complex based on the cellular proteins ELOB, ELOC, CUL5 and RBX1, in cooperation with viral E4orf6. This viral RING-type ligase ubiquitinates cellular substrates and targets them to proteasomal degradation: TP53/p53, LIG4, MRE11-RAD50-NBS1 (MRN) complex, ITGA3, DAXX and BLM. E1B-55K probably acts as the substrate-specific adapter of the SCF-like E3 ubiquitin ligase complex. Degradation of host TP53/p53 activity is essential for preventing E1A-induced TP53 accumulation that would otherwise lead to cell apoptosis and growth arrest. E1B-55K also inactivates TP53 transcription-factor activity by binding its transactivation domain. E1B-55K also functions as a SUMO1 E3 ligase for TP53 which causes the latter to be sequestered in promyelocytic leukemia (PML) nuclear bodies thereby contributing to maximal inhibition of TP53 function. The sequence is that of E1B 55 kDa protein from Human adenovirus F serotype 40 (HAdV-40).